The primary structure comprises 477 residues: Cobyric acid synthase (477 aa).

A GATase cobBQ-type domain is found at 248 to 432 (GLHIACPMLS…LHGLFSGDGF (185 aa)). The Nucleophile role is filled by C330. The active site involves H424.

It belongs to the CobB/CobQ family. CobQ subfamily.

The protein operates within cofactor biosynthesis; adenosylcobalamin biosynthesis. Its function is as follows. Catalyzes amidations at positions B, D, E, and G on adenosylcobyrinic A,C-diamide. NH(2) groups are provided by glutamine, and one molecule of ATP is hydrogenolyzed for each amidation. This is Cobyric acid synthase from Paracoccus denitrificans (strain Pd 1222).